Consider the following 786-residue polypeptide: MENLTEIESTMESLTEMESERVEQGTDKEIGSGEKRQDDVKETENENSGERVGEEAPVREHEDSPCLIVIEEGTSLASLEEVTNADDLPKIDDEKNSQFETSPHPSPSPSVALDTEEGLINPTAEDTVEENIVSSEVSSDILKDDGDAVEVDRDTAEVQEETANIPESKLSEDTGSPHHHADILMVQEKAAEEHDMIASGDHEEFPVNPDNKHSEENQSPHHHANNVMEQDQAAEEREIISPGEHKEIPANPDTKVVEENNDRIDEGEANNLNLAGDGSGAVDHDYLTKTELDKVLEVPGSETISKLEDRPSEHLSETSMNVEKELEMPAVEILPDNDKNSDVLAVGVSGDSDNVVSVLPASQTSSDRDEGMITVDAEPTEDMKLDVPDSKLVTDTTVDSTNNKDAHVEANTERQDNSSALVLNDANNESAPVKRVPGPYVASSNIKSEARGSGDLNNGVHKIVRTPPVFDGTMRAKRSFLLDDASDGNESGTEEDQSAFMKELDSFFRERNMDFKPPKFYGEGLNCLKLWRAVTRLGGYDKVTGSKLWRQVGESFRPPKTCTTVSWTFRGFYEKALLEYERHKVSEGELQIPLPLELEPMNIDNQASGSGRARRDAASRAMQGWHSQRLNGNGEVSDPAIKDKNLVLHQKREKQIGTTPGLLKRKRAAEHGAKNAIHVSKSMLDVTVVDVGPPADWVKINVQRTQDCFEVYALVPGLVREEVRVQSDPAGRLVISGEPENPMNPWGATPFKKVVSLPTRIDPHHTSAVVTLNGQLFVRVPLEQLE.

Residues 1 to 16 show a composition bias toward low complexity; it reads MENLTEIESTMESLTE. 3 disordered regions span residues 1–182, 199–251, and 395–420; these read MENL…HHAD, SGDH…IPAN, and DTTV…NSSA. Composition is skewed to basic and acidic residues over residues 18–64 and 87–97; these read ESER…HEDS and DLPKIDDEKNS. The segment covering 130–139 has biased composition (low complexity); the sequence is ENIVSSEVSS. 5 stretches are compositionally biased toward basic and acidic residues: residues 141 to 156, 169 to 182, 199 to 219, 234 to 248, and 402 to 416; these read ILKD…RDTA, KLSE…HHAD, SGDH…ENQS, AEER…HKEI, and NNKD…ERQD. The region spanning 494-585 is the ARID domain; that stretch reads EEDQSAFMKE…ALLEYERHKV (92 aa). The disordered stretch occupies residues 606 to 638; the sequence is QASGSGRARRDAASRAMQGWHSQRLNGNGEVSD. The 101-residue stretch at 686–786 folds into the sHSP domain; sequence VTVVDVGPPA…FVRVPLEQLE (101 aa).

This sequence belongs to the small heat shock protein (HSP20) family.

The protein resides in the nucleus. The chain is AT-rich interactive domain-containing protein 3 (ARID3) from Arabidopsis thaliana (Mouse-ear cress).